We begin with the raw amino-acid sequence, 131 residues long: UPF0342 protein DSY1594 (131 aa).

The protein belongs to the UPF0342 family.

The sequence is that of UPF0342 protein DSY1594 from Desulfitobacterium hafniense (strain Y51).